A 430-amino-acid chain; its full sequence is Enolase (430 aa).

Glutamine 163 lines the (2R)-2-phosphoglycerate pocket. Glutamate 205 functions as the Proton donor in the catalytic mechanism. Mg(2+) contacts are provided by aspartate 242, glutamate 285, and aspartate 312. Positions 337, 366, 367, and 388 each coordinate (2R)-2-phosphoglycerate. Lysine 337 (proton acceptor) is an active-site residue.

It belongs to the enolase family. Requires Mg(2+) as cofactor.

The protein localises to the cytoplasm. The protein resides in the secreted. Its subcellular location is the cell surface. It carries out the reaction (2R)-2-phosphoglycerate = phosphoenolpyruvate + H2O. It participates in carbohydrate degradation; glycolysis; pyruvate from D-glyceraldehyde 3-phosphate: step 4/5. Catalyzes the reversible conversion of 2-phosphoglycerate (2-PG) into phosphoenolpyruvate (PEP). It is essential for the degradation of carbohydrates via glycolysis. The sequence is that of Enolase from Bifidobacterium animalis subsp. lactis (strain AD011).